The sequence spans 264 residues: MDLGDNELTLTPIPGKSGKAYMGSYPDGKRIFVKMNTSPILPGLAREQIAPQLLWSRRLADGRDMCAQEWLTGKILTPYDMNRKQIVNILTRLHRSRPLMTQLSRLGYAMETPVDLLQSWQETAPDALRKNHFISEVMADLRQTIPGFREDHATIVHGDVRHSNWIETDSGLIYLVDWDSVRLTDRMFDVAHMLCHYISEHQWKEWLTYYGYKYNQTVLSKLYWYGQLSYLSQISKYYMNQDLENVNREIHGLRHFRDKYGKRR.

Residues Phe32, Trp70, and Gly73 each contribute to the ATP site. The Brenner's motif [HXDhX3N] signature appears at His157–Asn164. Residue Asp159 is the Proton acceptor of the active site. The short motif at Ile173 to His196 is the APH element.

It belongs to the aminoglycoside phosphotransferase family. Monomer in solution. Interacts with DnaA (via domains I (1-82) and III (111-326)). Interacts with DnaB. Interacts with FtsZ; the interaction is direct and ensures correct localization during the cell cycle.

The protein resides in the cytoplasm. It carries out the reaction D-ribose + ATP = D-ribose 5-phosphate + ADP + H(+). It catalyses the reaction 2-deoxy-D-ribose + ATP = 2-deoxy-D-ribose 5-phosphate + ADP + H(+). In terms of biological role, plays a role in cell cycle regulation and chromosome integrity. Activates DnaA-dependent chromosomal DNA replication initiation ensuring that the chromosome is replicated at the right time during the cell cycle. May regulate replication initiation through phosphorylation of a possible second messenger or metabolite, and by interacting with replication initiation proteins. Has ATPase activity with D-ribose and 2-deoxy-D-ribose in vitro, but not with choline. Involved in DNA damage response. This chain is Cell cycle regulator CcrZ, found in Streptococcus pneumoniae serotype 2 (strain D39 / NCTC 7466).